Reading from the N-terminus, the 91-residue chain is Mercuric transport protein periplasmic component (91 aa).

Positions 1–19 (MKKLFASLAIAAVVAPVWA) are cleaved as a signal peptide. Residues 22–88 (QTVTLSVPGM…ATEDAGYPSS (67 aa)) form the HMA domain. 2 residues coordinate Hg(2+): cysteine 33 and cysteine 36.

The protein belongs to the MerP family. In terms of assembly, monomer.

It localises to the periplasm. Functionally, involved in mercury resistance. Acts as a mercury scavenger that specifically binds to a mercuric ion in the periplasm and probably passes it to the cytoplasmic mercuric reductase MerA via the mercuric transport protein MerT. This is Mercuric transport protein periplasmic component from Serratia marcescens.